The chain runs to 172 residues: uncharacterized protein (172 aa).

This is an uncharacterized protein from Macaca mulatta (Rhesus macaque).